We begin with the raw amino-acid sequence, 85 residues long: MASTGEIWLQWFSCCFQQQRSPSRRPHQRLRIDRSMIGNPTNFVHTGHIGSADVELSANRLNAISTQMQSKGGYETNSIHSLHAC.

2 S-palmitoyl cysteine lipidation sites follow: Cys-14 and Cys-15. Residues 37 to 50 (IGNPTNFVHTGHIG) enclose the CRIB domain. Ser-78 and Ser-81 each carry phosphoserine.

This sequence belongs to the CDC42SE/SPEC family.

It localises to the cytoplasm. Its subcellular location is the cytoskeleton. It is found in the cell membrane. In terms of biological role, probably involved in the organization of the actin cytoskeleton by acting downstream of CDC42, inducing actin filament assembly. The protein is CDC42 small effector protein homolog (Spec2) of Drosophila melanogaster (Fruit fly).